We begin with the raw amino-acid sequence, 583 residues long: Sensor protein SrrB (583 aa).

Residues 1-11 (MMSRLNSVVIK) lie on the Cytoplasmic side of the membrane. A helical transmembrane segment spans residues 12 to 32 (LWLTIILIVTTVLILLSIALI). Topologically, residues 33–174 (TFMQYYFTQE…SIEDTNNAIT (142 aa)) are extracellular. The chain crosses the membrane as a helical span at residues 175 to 195 (IITIITAVIFLTITTVFAFFL). The Cytoplasmic portion of the chain corresponds to 196-583 (SSRITKPLRR…TFIIKLPKPE (388 aa)). The HAMP domain maps to 197-249 (SRITKPLRRLRDQATRVSEGDYSYKPSVTTKDEIGQLSQAFNQMSTEIEEHVD). One can recognise a Histidine kinase domain in the interval 366–583 (NVSHELRTPI…TFIIKLPKPE (218 aa)). His369 is modified (phosphohistidine; by autocatalysis).

It localises to the cell membrane. The catalysed reaction is ATP + protein L-histidine = ADP + protein N-phospho-L-histidine.. Member of the two-component regulatory system SrrA/SrrB, which is involved in the global regulation of staphylococcal virulence factors in response to environmental oxygen levels as well as biofilm formation. Also plays an essential role in host-derived nitric oxide resistance by regulating hmp/flavohemoglobin, an enzyme that detoxifies nitric oxide by converting it to nitrate. Functions as a sensor protein kinase which is autophosphorylated at a histidine residue and transfers its phosphate group to SrrA. In turn, SrrA binds to the upstream promoter regions of the target genes to positively and negatively regulate their expression. This is Sensor protein SrrB (srrB) from Staphylococcus aureus.